Reading from the N-terminus, the 104-residue chain is Phycoerythrin alpha-2 chain, chloroplastic (104 aa).

The transit peptide at 1 to 37 directs the protein to the chloroplast; that stretch reads MSAKIIAFSAVVATASAFAPTAGFVPRLRSGATSVNM. Lys-41 is subject to 5-hydroxylysine. 15,16-dihydrobiliverdin-binding residues include Cys-56 and Arg-58. Residues 61 to 63 are 15,16-dihydrobiliverdin chromophore; it reads KEY. A 15,16-dihydrobiliverdin-binding site is contributed by Lys-78.

The protein belongs to the phycoerythrin family. Heterotetramer of 2 different alpha chains and 2 identical beta chains. The subunit composition could comprise of any combination of 2 out of 4 different alpha units with an invariant beta unit. In terms of processing, contains one covalently linked 15,16-dihydrobiliverdin chromophore.

Its subcellular location is the plastid. It localises to the chloroplast thylakoid membrane. Its function is as follows. Light-harvesting photosynthetic tetrapyrrole chromophore-protein from the phycobiliprotein complex. This Rhodomonas sp. (strain CS 24) (Chroomonas sp. (strain CS24)) protein is Phycoerythrin alpha-2 chain, chloroplastic (cpeA2).